Consider the following 134-residue polypeptide: Small ribosomal subunit protein bS16 (134 aa).

Positions 105-134 are disordered; that stretch reads QNERREKRLAIKTRRRQAKKAAEAEGQESA. Over residues 114-123 the composition is skewed to basic residues; the sequence is AIKTRRRQAK.

The protein belongs to the bacterial ribosomal protein bS16 family.

The chain is Small ribosomal subunit protein bS16 from Chlorobium phaeobacteroides (strain BS1).